A 735-amino-acid polypeptide reads, in one-letter code: Phosphoribosylformylglycinamidine synthase subunit PurL (735 aa).

His-44 is a catalytic residue. 2 residues coordinate ATP: Tyr-47 and Lys-86. Glu-88 contacts Mg(2+). Substrate-binding positions include Ser-89–His-92 and Arg-111. The active-site Proton acceptor is His-90. Asp-112 is a Mg(2+) binding site. Gln-240 is a substrate binding site. Asp-268 is a Mg(2+) binding site. Glu-312–Gln-314 serves as a coordination point for substrate. ATP contacts are provided by Asp-496 and Gly-533. Asn-534 is a binding site for Mg(2+). Ser-536 contributes to the substrate binding site.

It belongs to the FGAMS family. In terms of assembly, monomer. Part of the FGAM synthase complex composed of 1 PurL, 1 PurQ and 2 PurS subunits.

The protein localises to the cytoplasm. It catalyses the reaction N(2)-formyl-N(1)-(5-phospho-beta-D-ribosyl)glycinamide + L-glutamine + ATP + H2O = 2-formamido-N(1)-(5-O-phospho-beta-D-ribosyl)acetamidine + L-glutamate + ADP + phosphate + H(+). Its pathway is purine metabolism; IMP biosynthesis via de novo pathway; 5-amino-1-(5-phospho-D-ribosyl)imidazole from N(2)-formyl-N(1)-(5-phospho-D-ribosyl)glycinamide: step 1/2. Functionally, part of the phosphoribosylformylglycinamidine synthase complex involved in the purines biosynthetic pathway. Catalyzes the ATP-dependent conversion of formylglycinamide ribonucleotide (FGAR) and glutamine to yield formylglycinamidine ribonucleotide (FGAM) and glutamate. The FGAM synthase complex is composed of three subunits. PurQ produces an ammonia molecule by converting glutamine to glutamate. PurL transfers the ammonia molecule to FGAR to form FGAM in an ATP-dependent manner. PurS interacts with PurQ and PurL and is thought to assist in the transfer of the ammonia molecule from PurQ to PurL. This is Phosphoribosylformylglycinamidine synthase subunit PurL from Nitratiruptor sp. (strain SB155-2).